A 597-amino-acid polypeptide reads, in one-letter code: Coronatine-insensitive protein homolog 1b (597 aa).

The F-box domain occupies 22 to 64; that stretch reads SIPEEALHLVLGYVDDPRDREAVSLVCRRWHRIDALTRKHVTV. The jasmonate site is built by Arg92, Arg353, Tyr391, Arg414, and Arg501.

Interacts with TIFY10C/JAZ8 in a coronatine-dependent manner. Interacts with TIFY3/JAZ1, TIFY6A/JAZ3, TIFY6B/JAZ4, TIFY10A/JAZ6, TIFY10B/JAZ7, TIFY11A/JAZ9, TIFY11B/JAZ10, TIFY11C/JAZ11 and TIFY11D/JAZ12 in a coronatine-dependent manner. In terms of tissue distribution, expressed in roots, shoots, leaf sheaths and leaf blades.

Involved in jasmonate (JA) signaling. Required for jasmonate signaling in plant defense responses. Can complement Arabidopsis coi1-1 mutant and restore jasmonate signaling. Component of SCF(COI1) E3 ubiquitin ligase complexes, which may mediate the ubiquitination and subsequent proteasomal degradation of target proteins, including TIFY/JAZ family. The polypeptide is Coronatine-insensitive protein homolog 1b (Oryza sativa subsp. japonica (Rice)).